The primary structure comprises 571 residues: Phosphoenolpyruvate-protein phosphotransferase (571 aa).

Histidine 207 functions as the Tele-phosphohistidine intermediate in the catalytic mechanism. Phosphoenolpyruvate contacts are provided by arginine 312 and arginine 348. Residues glutamate 435 and aspartate 459 each coordinate Mg(2+). Phosphoenolpyruvate contacts are provided by residues 458-459 and arginine 469; that span reads ND. Cysteine 506 functions as the Proton donor in the catalytic mechanism.

The protein belongs to the PEP-utilizing enzyme family. In terms of assembly, homodimer. Mg(2+) is required as a cofactor.

The protein resides in the cytoplasm. It catalyses the reaction L-histidyl-[protein] + phosphoenolpyruvate = N(pros)-phospho-L-histidyl-[protein] + pyruvate. Functionally, general (non sugar-specific) component of the phosphoenolpyruvate-dependent sugar phosphotransferase system (sugar PTS). This major carbohydrate active-transport system catalyzes the phosphorylation of incoming sugar substrates concomitantly with their translocation across the cell membrane. Enzyme I transfers the phosphoryl group from phosphoenolpyruvate (PEP) to the phosphoryl carrier protein (HPr). In Chlamydia trachomatis serovar D (strain ATCC VR-885 / DSM 19411 / UW-3/Cx), this protein is Phosphoenolpyruvate-protein phosphotransferase (ptsI).